A 401-amino-acid chain; its full sequence is Calcium-responsive transcription coactivator (401 aa).

An N-terminal auto-inhibitory domain; necessary for interaction with SMARCA4/BRG1 region spans residues 1–148 (MSVAFASARP…TLPTTSMSMS (148 aa)). The SH2-binding signature appears at 50 to 53 (YQQI). Disordered stretches follow at residues 72–171 (QSLL…VPMQ) and 214–401 (TRAR…NYQQ). The segment covering 85-106 (LGPGALSQSGSSQGLHPQGSLS) has biased composition (low complexity). Residues 128–137 (NHVSMQQTAQ) show a composition bias toward polar residues. Over residues 138 to 149 (STLPTTSMSMSG) the composition is skewed to low complexity. The methionine-rich intra-molecular domain stretch occupies residues 149–237 (GSGHGTGPGY…GGSMMGQRPM (89 aa)). Residues 251 to 322 (YLGQEEYYSE…SQYSQQQAGY (72 aa)) are MFD domain. Polar residues-rich tracts occupy residues 260–276 (EQYS…SQQY) and 285–294 (AYQQSSYTEQ). The segment covering 295-304 (SYDRSFEDPT) has biased composition (basic and acidic residues). Low complexity predominate over residues 310–374 (GGNSQYSQQQ…QGQGQQYGSY (65 aa)). The segment at 339-401 (NQQSYPGQQQ…EQGQYGNYQQ (63 aa)) is necessary for nuclear localization. The SH2-binding signature appears at 358–361 (SQYS). The span at 375–387 (RTSQTGPSAQQQR) shows a compositional bias: polar residues. The short motif at 376 to 384 (TSQTGPSAQ) is the SH3-binding element. A compositionally biased stretch (low complexity) spans 389-401 (YGYEQGQYGNYQQ). The segment at 392–401 (EQGQYGNYQQ) is necessary for interaction with CREBBP and for the recruitment of CREBBP to the nuclear bodies. Positions 396–399 (YGNY) match the SH2-binding motif.

This sequence belongs to the SS18 family. Homodimer. Dimerization may be necessary for its function in neuronal dendritic development. Interacts (via C-terminus) with CREBBP (via N-terminus), EP300 and SMARCA4/BRG1. Interacts with the nBAF complex. Association with CREBBP facilitates transcription while the association with SMARCA4/BRG1 suppresses CREST-mediated transcription in resting neurons. As to expression, brain (at protein level). Also found in the heart, liver, kidney and testis.

Its subcellular location is the nucleus. The protein resides in the chromosome. It localises to the centromere. It is found in the kinetochore. Functionally, transcriptional activator which is required for calcium-dependent dendritic growth and branching in cortical neurons. Recruits CREB-binding protein (CREBBP) to nuclear bodies. Component of the CREST-BRG1 complex, a multiprotein complex that regulates promoter activation by orchestrating a calcium-dependent release of a repressor complex and a recruitment of an activator complex. In resting neurons, transcription of the c-FOS promoter is inhibited by BRG1-dependent recruitment of a phospho-RB1-HDAC1 repressor complex. Upon calcium influx, RB1 is dephosphorylated by calcineurin, which leads to release of the repressor complex. At the same time, there is increased recruitment of CREBBP to the promoter by a CREST-dependent mechanism, which leads to transcriptional activation. The CREST-BRG1 complex also binds to the NR2B promoter, and activity-dependent induction of NR2B expression involves a release of HDAC1 and recruitment of CREBBP. In Rattus norvegicus (Rat), this protein is Calcium-responsive transcription coactivator (Ss18l1).